Here is a 181-residue protein sequence, read N- to C-terminus: UPF0397 protein STER_0346 (181 aa).

5 helical membrane-spanning segments follow: residues 11-31 (ATGIGAALFIIIGMFVNIPIF), 45-65 (LFSVIFGPITGFFMGFIGHAL), 72-92 (GNISWAWVLASGITGLVIGLF), 109-129 (IWFNLAQALGLLIGYGVVTPI), and 147-167 (FVAGVANFITIAIGGTLLLAI).

The protein belongs to the UPF0397 family.

The protein resides in the cell membrane. The polypeptide is UPF0397 protein STER_0346 (Streptococcus thermophilus (strain ATCC BAA-491 / LMD-9)).